The following is a 1009-amino-acid chain: Probable beta-galactosidase B (1009 aa).

An N-terminal signal peptide occupies residues 1–21 (MAQLFTKIIVYFLLFASPLLA). N-linked (GlcNAc...) asparagine glycosylation occurs at Asn-28. Position 85 (Tyr-85) interacts with substrate. A glycan (N-linked (GlcNAc...) asparagine) is linked at Asn-95. Residues Asn-130, Ala-131, Glu-132, and Asn-190 each contribute to the substrate site. Catalysis depends on Glu-191, which acts as the Proton donor. N-linked (GlcNAc...) asparagine glycosylation is present at Asn-247. Tyr-260 contributes to the substrate binding site. Cysteines 266 and 319 form a disulfide. Glu-303 acts as the Nucleophile in catalysis. Residue Tyr-368 coordinates substrate. N-linked (GlcNAc...) asparagine glycosylation is found at Asn-375, Asn-406, Asn-427, Asn-451, Asn-682, Asn-740, Asn-771, Asn-784, Asn-826, and Asn-883.

It belongs to the glycosyl hydrolase 35 family.

The protein resides in the secreted. It catalyses the reaction Hydrolysis of terminal non-reducing beta-D-galactose residues in beta-D-galactosides.. In terms of biological role, cleaves beta-linked terminal galactosyl residues from gangliosides, glycoproteins, and glycosaminoglycans. The protein is Probable beta-galactosidase B (lacB) of Talaromyces marneffei (strain ATCC 18224 / CBS 334.59 / QM 7333) (Penicillium marneffei).